Consider the following 461-residue polypeptide: Argininosuccinate lyase (461 aa).

Belongs to the lyase 1 family. Argininosuccinate lyase subfamily.

Its subcellular location is the cytoplasm. The enzyme catalyses 2-(N(omega)-L-arginino)succinate = fumarate + L-arginine. The protein operates within amino-acid biosynthesis; L-arginine biosynthesis; L-arginine from L-ornithine and carbamoyl phosphate: step 3/3. The sequence is that of Argininosuccinate lyase from Chlorobium chlorochromatii (strain CaD3).